The following is a 208-amino-acid chain: Uracil phosphoribosyltransferase (208 aa).

5-phospho-alpha-D-ribose 1-diphosphate-binding positions include R78, R103, and 130–138 (DPMLATGGT). Uracil is bound by residues I193 and 198 to 200 (GDA). D199 contributes to the 5-phospho-alpha-D-ribose 1-diphosphate binding site.

The protein belongs to the UPRTase family. Requires Mg(2+) as cofactor.

The enzyme catalyses UMP + diphosphate = 5-phospho-alpha-D-ribose 1-diphosphate + uracil. Its pathway is pyrimidine metabolism; UMP biosynthesis via salvage pathway; UMP from uracil: step 1/1. With respect to regulation, allosterically activated by GTP. In terms of biological role, catalyzes the conversion of uracil and 5-phospho-alpha-D-ribose 1-diphosphate (PRPP) to UMP and diphosphate. The polypeptide is Uracil phosphoribosyltransferase (Desulfotalea psychrophila (strain LSv54 / DSM 12343)).